The sequence spans 831 residues: Maltodextrin phosphorylase (831 aa).

At lysine 592 the chain carries N6-(pyridoxal phosphate)lysine.

The protein belongs to the glycogen phosphorylase family. As to quaternary structure, trimer (at 25 degrees Celsius). Pyridoxal 5'-phosphate serves as cofactor.

The enzyme catalyses [(1-&gt;4)-alpha-D-glucosyl](n) + phosphate = [(1-&gt;4)-alpha-D-glucosyl](n-1) + alpha-D-glucose 1-phosphate. Functionally, phosphorylase is an important allosteric enzyme in carbohydrate metabolism. Catalyzes the phospholytic cleavage of maltodextrins with a minimal chain length of five glucose residues to yield glucose-1-phosphate. Low activity with tetraose and no activity with triose and maltose. Long maltodextrins (8 to 15 glucose units), amylose and starch are not as good substrates as maltoheptaose. The protein is Maltodextrin phosphorylase (malP) of Thermococcus litoralis (strain ATCC 51850 / DSM 5473 / JCM 8560 / NS-C).